Here is a 78-residue protein sequence, read N- to C-terminus: Large ribosomal subunit protein bL28 (78 aa).

This sequence belongs to the bacterial ribosomal protein bL28 family.

The protein is Large ribosomal subunit protein bL28 of Tropheryma whipplei (strain TW08/27) (Whipple's bacillus).